Consider the following 315-residue polypeptide: Methionyl-tRNA formyltransferase (315 aa).

Positions 2–189 are N-terminal domain; that stretch reads SDSLRIIFAG…LITTLKQLAD (188 aa). 113–116 is a binding site for (6S)-5,6,7,8-tetrahydrofolate; the sequence is SLLP. Residues 210-315 are C-terminal domain; that stretch reads KEEARIDWSL…EWFIPGNRLA (106 aa).

This sequence belongs to the Fmt family.

The catalysed reaction is L-methionyl-tRNA(fMet) + (6R)-10-formyltetrahydrofolate = N-formyl-L-methionyl-tRNA(fMet) + (6S)-5,6,7,8-tetrahydrofolate + H(+). Attaches a formyl group to the free amino group of methionyl-tRNA(fMet). The formyl group appears to play a dual role in the initiator identity of N-formylmethionyl-tRNA by promoting its recognition by IF2 and preventing the misappropriation of this tRNA by the elongation apparatus. This Salmonella typhi protein is Methionyl-tRNA formyltransferase.